The following is a 23-amino-acid chain: Phallacidin proprotein (23 aa).

Residue proline 1 is a propeptide. The cyclopeptide (Ala-Pro) cross-link spans 2 to 8; that stretch reads AWLVDCP. A cross-link (2'-cysteinyl-6'-hydroxytryptophan sulfoxide (Trp-Cys)) is located at residues 3–7; sequence WLVDC. The propeptide occupies 9–23; that stretch reads CVGDDISRLLTRGEK.

Belongs to the MSDIN fungal toxin family. Post-translationally, processed by the macrocyclase-peptidase enzyme POPB to yield a toxic cyclic heptapeptide. POPB first removes 10 residues from the N-terminus. Conformational trapping of the remaining peptide forces the enzyme to release this intermediate rather than proceed to macrocyclization. The enzyme rebinds the remaining peptide in a different conformation and catalyzes macrocyclization of the N-terminal 7 residues.

In terms of biological role, major toxin that belongs to the bicyclic heptapeptides called phallotoxins. Although structurally related to amatoxins, phallotoxins have a different mode of action, which is the stabilization of F-actin. Phallotoxins are poisonous when administered parenterally, but not orally because of poor absorption. This chain is Phallacidin proprotein, found in Amanita rimosa.